Here is a 1199-residue protein sequence, read N- to C-terminus: DNA-directed RNA polymerase subunit beta (1199 aa).

A disordered region spans residues 1175–1199 (EEKKAHEAAAQATDGKSANSTDDKK). The segment covering 1188–1199 (DGKSANSTDDKK) has biased composition (polar residues).

Belongs to the RNA polymerase beta chain family. In terms of assembly, the RNAP catalytic core consists of 2 alpha, 1 beta, 1 beta' and 1 omega subunit. When a sigma factor is associated with the core the holoenzyme is formed, which can initiate transcription.

It carries out the reaction RNA(n) + a ribonucleoside 5'-triphosphate = RNA(n+1) + diphosphate. In terms of biological role, DNA-dependent RNA polymerase catalyzes the transcription of DNA into RNA using the four ribonucleoside triphosphates as substrates. This is DNA-directed RNA polymerase subunit beta from Lacticaseibacillus paracasei (strain ATCC 334 / BCRC 17002 / CCUG 31169 / CIP 107868 / KCTC 3260 / NRRL B-441) (Lactobacillus paracasei).